The sequence spans 385 residues: Zinc cluster transcription factor CZF1 (385 aa).

Residues 1 to 19 (MSSIPNINWNDPNNGKSNT) are compositionally biased toward polar residues. Disordered stretches follow at residues 1–117 (MSSI…QQPL), 154–216 (LQQR…QQWD), and 233–308 (SSIQ…KPIT). The span at 20–38 (SRQSQPQPQLPSNVSPPNS) shows a compositional bias: low complexity. 2 stretches are compositionally biased toward polar residues: residues 52 to 67 (YGSS…NPNT) and 88 to 97 (YPVQQTAQQR). Low complexity-rich tracts occupy residues 102-117 (LQQV…QQPL) and 154-169 (LQQR…KSQL). A compositionally biased stretch (polar residues) spans 170 to 200 (NEQNAMMSASTQQYPVQDFTNPYPNAQNPAE). 2 stretches are compositionally biased toward low complexity: residues 201 to 214 (QQQQ…QSQQ) and 233 to 256 (SSIQ…KQQQ). A compositionally biased stretch (basic residues) spans 265-275 (KKKPGRKPKLR). Positions 279-291 (ESSSETPQVPKTA) are enriched in polar residues. The segment at residues 315–342 (CLTCRQRKKRCCETRPRCTECTRLRLNC) is a DNA-binding region (zn(2)-C6 fungal-type). The interval 345–364 (PKPGTEHKNKPKDQKDDENT) is disordered. A compositionally biased stretch (basic and acidic residues) spans 348-364 (GTEHKNKPKDQKDDENT).

Interacts with EFG1.

The protein resides in the nucleus. Functionally, transcriptional regulator of the switch between 2 heritable states, the white and opaque states. These 2 cell types differ in many characteristics, including cell structure, mating competence, and virulence. Each state is heritable for many generations, and switching between states occurs stochastically, at low frequency. Contributes to formation of the opaque state, but is not necessary for heritability of the opaque state. Plays a role in cell adhesion and pseudohyphal growth. Involved in acquisition of drug resistance and acts as a repressor of beta-glucan synthesis, thus negatively regulating cell wall integrity. Plays a role in adherence, invasion and damage to oral epithelial cells. The chain is Zinc cluster transcription factor CZF1 (CZF1) from Candida albicans (strain SC5314 / ATCC MYA-2876) (Yeast).